The following is a 407-amino-acid chain: MSIENNKASVKKVVLAYSGGLDTSAIIPWLKETYDNCEIVAFCADVGQGEAELEGLHEKAIASGASECYIVDLKEELVADYIYPTIATGAIYEGTYLLGTSMARPIIAKAQVEVARKVGADAVCHGCTGKGNDQVRFEGCFAALAPDLTVIAPWREWSMVSREDLLDYLAERNIKTTASATKIYSRDANAWHISHEGGELEDPWNEPSKEVWTMTVAPEDAPDEPEYVSVEMEAGRITKVNGQSYTPYGALMALNEIAGAHGVGRIDITENRLVGMKSRGCYETPGGTVMFAALRAIEELVLDKTSREWREQVGAKMAHLVYDGRWFTPLCESLLGASQPLANLLNGEVVLKLYKGQAQAVKKRSPNSLYSEEFATFGEDEVYNQKDAEGFIRLYSLASRIRALNVK.

ATP-binding positions include 16 to 24 and Ala44; that span reads AYSGGLDTS. Residues Tyr96 and Ser101 each contribute to the L-citrulline site. Gly126 is a binding site for ATP. L-aspartate-binding residues include Thr128, Asn132, and Asp133. L-citrulline is bound at residue Asn132. 5 residues coordinate L-citrulline: Arg136, Ser185, Ser194, Glu270, and Tyr282.

This sequence belongs to the argininosuccinate synthase family. Type 1 subfamily. As to quaternary structure, homotetramer.

It localises to the cytoplasm. It carries out the reaction L-citrulline + L-aspartate + ATP = 2-(N(omega)-L-arginino)succinate + AMP + diphosphate + H(+). The protein operates within amino-acid biosynthesis; L-arginine biosynthesis; L-arginine from L-ornithine and carbamoyl phosphate: step 2/3. This Shewanella loihica (strain ATCC BAA-1088 / PV-4) protein is Argininosuccinate synthase.